A 280-amino-acid polypeptide reads, in one-letter code: 4-deoxy-L-threo-5-hexosulose-uronate ketol-isomerase (280 aa).

Residues His-198, His-200, Glu-205, and His-247 each contribute to the Zn(2+) site.

The protein belongs to the KduI family. Requires Zn(2+) as cofactor.

It carries out the reaction 5-dehydro-4-deoxy-D-glucuronate = 3-deoxy-D-glycero-2,5-hexodiulosonate. It participates in glycan metabolism; pectin degradation; 2-dehydro-3-deoxy-D-gluconate from pectin: step 4/5. In terms of biological role, catalyzes the isomerization of 5-dehydro-4-deoxy-D-glucuronate to 3-deoxy-D-glycero-2,5-hexodiulosonate. In Bacteroides fragilis (strain ATCC 25285 / DSM 2151 / CCUG 4856 / JCM 11019 / LMG 10263 / NCTC 9343 / Onslow / VPI 2553 / EN-2), this protein is 4-deoxy-L-threo-5-hexosulose-uronate ketol-isomerase.